We begin with the raw amino-acid sequence, 241 residues long: Purine nucleoside phosphorylase DeoD-type 1 (241 aa).

His5 is an a purine D-ribonucleoside binding site. Phosphate is bound by residues Gly21, Arg25, Arg44, and 88 to 91 (RVGS). A purine D-ribonucleoside is bound by residues 180–182 (EME) and 204–205 (SD). Asp205 (proton donor) is an active-site residue.

Belongs to the PNP/UDP phosphorylase family. Homohexamer; trimer of homodimers.

The catalysed reaction is a purine D-ribonucleoside + phosphate = a purine nucleobase + alpha-D-ribose 1-phosphate. It catalyses the reaction a purine 2'-deoxy-D-ribonucleoside + phosphate = a purine nucleobase + 2-deoxy-alpha-D-ribose 1-phosphate. Functionally, catalyzes the reversible phosphorolytic breakdown of the N-glycosidic bond in the beta-(deoxy)ribonucleoside molecules, with the formation of the corresponding free purine bases and pentose-1-phosphate. This chain is Purine nucleoside phosphorylase DeoD-type 1, found in Photobacterium profundum (strain SS9).